Consider the following 310-residue polypeptide: Porphobilinogen deaminase (310 aa).

Cysteine 243 carries the S-(dipyrrolylmethanemethyl)cysteine modification.

The protein belongs to the HMBS family. In terms of assembly, monomer. Dipyrromethane is required as a cofactor.

It carries out the reaction 4 porphobilinogen + H2O = hydroxymethylbilane + 4 NH4(+). Its pathway is porphyrin-containing compound metabolism; protoporphyrin-IX biosynthesis; coproporphyrinogen-III from 5-aminolevulinate: step 2/4. Tetrapolymerization of the monopyrrole PBG into the hydroxymethylbilane pre-uroporphyrinogen in several discrete steps. In Methylobacillus flagellatus (strain ATCC 51484 / DSM 6875 / VKM B-1610 / KT), this protein is Porphobilinogen deaminase.